Here is a 117-residue protein sequence, read N- to C-terminus: Large ribosomal subunit protein uL18 (117 aa).

It belongs to the universal ribosomal protein uL18 family. Part of the 50S ribosomal subunit; part of the 5S rRNA/L5/L18/L25 subcomplex. Contacts the 5S and 23S rRNAs.

In terms of biological role, this is one of the proteins that bind and probably mediate the attachment of the 5S RNA into the large ribosomal subunit, where it forms part of the central protuberance. This chain is Large ribosomal subunit protein uL18, found in Aliivibrio fischeri (strain MJ11) (Vibrio fischeri).